The primary structure comprises 147 residues: Large ribosomal subunit protein uL15 (147 aa).

The interval 1 to 62 (MDLSNLRPAI…GQMPLQRRLP (62 aa)) is disordered. Composition is skewed to gly residues over residues 21 to 31 (RGPGSGNGKTA) and 42 to 52 (SGGGVKPGFEG).

The protein belongs to the universal ribosomal protein uL15 family. As to quaternary structure, part of the 50S ribosomal subunit.

In terms of biological role, binds to the 23S rRNA. This is Large ribosomal subunit protein uL15 from Syntrophotalea carbinolica (strain DSM 2380 / NBRC 103641 / GraBd1) (Pelobacter carbinolicus).